The sequence spans 43 residues: Protein PsbN (43 aa).

The chain crosses the membrane as a helical span at residues 5–27; that stretch reads NLVTISISCLLVSLTGYAIYTSF.

Belongs to the PsbN family.

The protein localises to the plastid. Its subcellular location is the chloroplast thylakoid membrane. Its function is as follows. May play a role in photosystem I and II biogenesis. In Gnetum gnemon (Spanish joint-fir), this protein is Protein PsbN.